Here is a 274-residue protein sequence, read N- to C-terminus: Large ribosomal subunit protein uL2cz/uL2cy (274 aa).

Disordered stretches follow at residues 1–21 and 224–274; these read MAIHLYKTSTPSTRNGAVDSQ and NPVD…RRSK.

The protein belongs to the universal ribosomal protein uL2 family. Part of the 50S ribosomal subunit.

It is found in the plastid. It localises to the chloroplast. In Populus trichocarpa (Western balsam poplar), this protein is Large ribosomal subunit protein uL2cz/uL2cy (rpl2-A).